A 281-amino-acid chain; its full sequence is Probable endonuclease 4 (281 aa).

Residues His-67, His-107, Glu-144, Asp-178, His-181, His-215, Asp-228, His-230, and Glu-260 each contribute to the Zn(2+) site.

This sequence belongs to the AP endonuclease 2 family. Zn(2+) is required as a cofactor.

The enzyme catalyses Endonucleolytic cleavage to 5'-phosphooligonucleotide end-products.. Functionally, endonuclease IV plays a role in DNA repair. It cleaves phosphodiester bonds at apurinic or apyrimidinic (AP) sites, generating a 3'-hydroxyl group and a 5'-terminal sugar phosphate. This Methanocorpusculum labreanum (strain ATCC 43576 / DSM 4855 / Z) protein is Probable endonuclease 4.